The sequence spans 60 residues: Beta-toxin BotIT2 (60 aa).

In terms of domain architecture, LCN-type CS-alpha/beta spans 1 to 60 (DGYIKGYKGCKITCVINDDYCDTECKAEGGTYGYCWKWGLACWCEDLPDEKRWKSETNTC). 4 disulfides stabilise this stretch: Cys10-Cys60, Cys14-Cys35, Cys21-Cys42, and Cys25-Cys44.

The protein belongs to the long (4 C-C) scorpion toxin superfamily. Sodium channel inhibitor family. Beta subfamily. As to expression, expressed by the venom gland.

The protein resides in the secreted. Beta toxins bind voltage-independently at site-4 of sodium channels (Nav) and shift the voltage of activation toward more negative potentials thereby affecting sodium channel activation and promoting spontaneous and repetitive firing. This toxin specifically acts by inducing a new current with very slow activation/deactivation kinetics due to the transformation of normal fast channels into slow ones. It possess properties of excitatory and depressant toxins. It is highly active on insects and less active on mammals. The chain is Beta-toxin BotIT2 from Buthus occitanus tunetanus (Common European scorpion).